Reading from the N-terminus, the 423-residue chain is uncharacterized protein (423 aa).

The 71-residue stretch at 75-145 (LHVVVTQPIA…PIVNNIKVAG (71 aa)) folds into the BON domain.

It belongs to the bacterial secretin family.

Involved in the secretion of an unknown compound. This is an uncharacterized protein from Sinorhizobium fredii (strain NBRC 101917 / NGR234).